Reading from the N-terminus, the 235-residue chain is Lipoprotein-releasing system ATP-binding protein LolD (235 aa).

Residues Leu-7–Arg-234 enclose the ABC transporter domain. Gly-43–Ser-50 serves as a coordination point for ATP.

It belongs to the ABC transporter superfamily. Lipoprotein translocase (TC 3.A.1.125) family. The complex is composed of two ATP-binding proteins (LolD) and two transmembrane proteins (LolC and LolE).

It is found in the cell inner membrane. In terms of biological role, part of the ABC transporter complex LolCDE involved in the translocation of mature outer membrane-directed lipoproteins, from the inner membrane to the periplasmic chaperone, LolA. Responsible for the formation of the LolA-lipoprotein complex in an ATP-dependent manner. The chain is Lipoprotein-releasing system ATP-binding protein LolD from Pectobacterium atrosepticum (strain SCRI 1043 / ATCC BAA-672) (Erwinia carotovora subsp. atroseptica).